Reading from the N-terminus, the 330-residue chain is Methionyl-tRNA formyltransferase (330 aa).

A (6S)-5,6,7,8-tetrahydrofolate-binding site is contributed by 112 to 115 (SLLP).

It belongs to the Fmt family.

It carries out the reaction L-methionyl-tRNA(fMet) + (6R)-10-formyltetrahydrofolate = N-formyl-L-methionyl-tRNA(fMet) + (6S)-5,6,7,8-tetrahydrofolate + H(+). Functionally, attaches a formyl group to the free amino group of methionyl-tRNA(fMet). The formyl group appears to play a dual role in the initiator identity of N-formylmethionyl-tRNA by promoting its recognition by IF2 and preventing the misappropriation of this tRNA by the elongation apparatus. This chain is Methionyl-tRNA formyltransferase, found in Synechocystis sp. (strain ATCC 27184 / PCC 6803 / Kazusa).